A 495-amino-acid polypeptide reads, in one-letter code: Cytochrome P450 monooxygenase aneF (495 aa).

A helical membrane pass occupies residues 1 to 21; it reads MIAGLVLVVLLTKYLQRVFLH. Asn47 carries an N-linked (GlcNAc...) asparagine glycan. Cys437 contributes to the heme binding site.

It belongs to the cytochrome P450 family. It depends on heme as a cofactor.

It is found in the membrane. It catalyses the reaction dauca-4,7-diene + 3 reduced [NADPH--hemoprotein reductase] + 3 O2 = asperaculane D + 3 oxidized [NADPH--hemoprotein reductase] + 4 H2O + 4 H(+). Its pathway is secondary metabolite biosynthesis. In terms of biological role, cytochrome P450 monooxygenase; part of the gene cluster that mediates the biosynthesis of aculenes, a unique type of norsesquiterpenes that contain a nordaucane skeleton linked to an L-proline moiety and are of mixed biosynthetic origin. The pathway begins with the synthesis of dauca-4,7-diene by the terpene cyclase aneC using farnesyl pyrophosphate (FPP) as substrate. The cytochrome P450 monooxygenase aneF then performs the initial oxidation at C-12 of dauca-4,7-diene to yield asperaculane D. Asperaculane D is substrate of the cytochrome P450 monooxygenase aneD for C-10 hydroxylation to yield asperaculane E. The cytochrome P450 monooxygenase aneG then converts asperaculane E into aculene D via C-2 oxidation. The monomodular nonribosomal peptide synthtase aneB adenylates L-proline and the thiohydrolase aneE transfers this activated L-proline derivative to aculenes D and C to produce respectively aculenes B and A. The dioxygenase aneA converts aculene D into aculene C, and aculene B into aculene A by introducing the 5,6-alkene moiety. Asperculanes A, B, C and F, as well as 14-prolyl asperculane C, might be shunt products of the pathway. The sequence is that of Cytochrome P450 monooxygenase aneF from Aspergillus aculeatus (strain ATCC 16872 / CBS 172.66 / WB 5094).